The chain runs to 175 residues: Transcription factor E (175 aa).

The 86-residue stretch at D3 to P88 folds into the HTH TFE/IIEalpha-type domain.

It belongs to the TFE family. As to quaternary structure, monomer. Interaction with RNA polymerase subunits RpoF and RpoE is necessary for Tfe stimulatory transcription activity. Able to interact with Tbp and RNA polymerase in the absence of DNA promoter. Interacts both with the preinitiation and elongation complexes.

Its function is as follows. Transcription factor that plays a role in the activation of archaeal genes transcribed by RNA polymerase. Facilitates transcription initiation by enhancing TATA-box recognition by TATA-box-binding protein (Tbp), and transcription factor B (Tfb) and RNA polymerase recruitment. Not absolutely required for transcription in vitro, but particularly important in cases where Tbp or Tfb function is not optimal. It dynamically alters the nucleic acid-binding properties of RNA polymerases by stabilizing the initiation complex and destabilizing elongation complexes. Seems to translocate with the RNA polymerase following initiation and acts by binding to the non template strand of the transcription bubble in elongation complexes. This chain is Transcription factor E, found in Methanococcus vannielii (strain ATCC 35089 / DSM 1224 / JCM 13029 / OCM 148 / SB).